The chain runs to 373 residues: Anhydro-N-acetylmuramic acid kinase (373 aa).

An ATP-binding site is contributed by 12–19 (GTSLDGVD).

Belongs to the anhydro-N-acetylmuramic acid kinase family.

It carries out the reaction 1,6-anhydro-N-acetyl-beta-muramate + ATP + H2O = N-acetyl-D-muramate 6-phosphate + ADP + H(+). It functions in the pathway amino-sugar metabolism; 1,6-anhydro-N-acetylmuramate degradation. It participates in cell wall biogenesis; peptidoglycan recycling. Catalyzes the specific phosphorylation of 1,6-anhydro-N-acetylmuramic acid (anhMurNAc) with the simultaneous cleavage of the 1,6-anhydro ring, generating MurNAc-6-P. Is required for the utilization of anhMurNAc either imported from the medium or derived from its own cell wall murein, and thus plays a role in cell wall recycling. The protein is Anhydro-N-acetylmuramic acid kinase of Serratia proteamaculans (strain 568).